We begin with the raw amino-acid sequence, 586 residues long: Major facilitator superfamily domain-containing protein 6-like (586 aa).

2 helical membrane passes run 50–70 and 78–98; these read TLMG…AFLA and ALLI…VLVP. The segment at 133-160 is disordered; the sequence is AQESASSHPAKRTAEVEMPGFRNPPGES. Helical transmembrane passes span 246 to 266, 287 to 307, 326 to 346, 361 to 381, 400 to 420, 433 to 455, 456 to 476, 499 to 519, and 521 to 541; these read FILS…LEQV, LWVW…ALVG, GYSV…IPIC, IVGG…VGAI, ELVM…LHPF, LVGL…WSWW, SVLP…WAVG, FYGS…MRFS, and AVLY…LLSI.

It belongs to the major facilitator superfamily. MFSD6 family.

It is found in the membrane. The polypeptide is Major facilitator superfamily domain-containing protein 6-like (MFSD6L) (Homo sapiens (Human)).